A 577-amino-acid chain; its full sequence is Vacuolar membrane amino acid uptake transporter fnx2 (577 aa).

Residues 1–14 (MSNPRTKSPNTNRG) are compositionally biased toward polar residues. A disordered region spans residues 1–80 (MSNPRTKSPN…SPHRQDAATT (80 aa)). Over residues 22-39 (SALLNDSLSSLNGNSSYD) the composition is skewed to low complexity. Residues 40–62 (SIKDSSKNNKDVAEVNEYPRRPE) show a composition bias toward basic and acidic residues. 14 helical membrane-spanning segments follow: residues 91-111 (VLPALLLGVVLAALDNTIVAS), 123-145 (FSQVSWTATAYMISCTAFQPLFG), 157-177 (LLAAYCVFGIGCFLCGTSRSL), 186-206 (IAGIGGGGMNSTVSILMSDIV), 217-237 (IINVFFAIGSSLGGPVGGYFA), 244-264 (IGFLIQVPLIAIAFLCVYFTL), 286-306 (LILLIIGVTTMTCAFTLGGNV), 317-337 (LLIASSISYLSFVYVEAFVAF), 356-376 (LCNFFHSVANFGWIYGMPLFF), 391-411 (LIPMIIGSSLGSLLGGAVISL), 418-438 (ITVGSYFFGSVAALFMLRYGY), 448-468 (YPFSGGLGNGIAVTTTLVAII), 490-510 (GCVLGVSISSSIVQTVLGIKL), and 547-567 (LLGSIHYSFLFVSFMFFCAFV).

Belongs to the major facilitator superfamily.

The protein localises to the vacuole. The protein resides in the membrane. In terms of biological role, MFS-type transporter involved in vacuolar amino acid uptake. The polypeptide is Vacuolar membrane amino acid uptake transporter fnx2 (fnx2) (Schizosaccharomyces pombe (strain 972 / ATCC 24843) (Fission yeast)).